Here is a 265-residue protein sequence, read N- to C-terminus: Arginine and glutamate-rich protein 1 (265 aa).

Residues 1–54 (MGRSRSRSSSRSKHAKSGKHNKKRSRSREKERVRKRSKSRESKRNRRRESRSRS) show a composition bias toward basic residues. A necessary and sufficient for RNA binding region spans residues 1–66 (MGRSRSRSSS…NTASRRERER (66 aa)). Residues 1 to 106 (MGRSRSRSSS…EKKAEYERQR (106 aa)) form a disordered region. Basic and acidic residues-rich tracts occupy residues 60–76 (SRRERERAASPPDRIDI) and 85–106 (SSLDEKQKREDEEKKAEYERQR). A necessary and sufficient for transcriptional regulation region spans residues 67-265 (AASPPDRIDI…KLSFSLKSPD (199 aa)). The LXXLL motif 1; degenerate motif lies at 164 to 168 (LLEEL). The LXXLL motif 2; degenerate motif lies at 193–197 (LERIL). The segment covering 229–245 (RMKLEQERQRQQKEEQK) has biased composition (basic and acidic residues). Residues 229-265 (RMKLEQERQRQQKEEQKIILGKGKSRPKLSFSLKSPD) form a disordered region.

The protein belongs to the ARGLU1 family.

The protein localises to the nucleus. Its subcellular location is the nucleus speckle. It localises to the chromosome. Functionally, dual function regulator of gene expression; regulator of transcription and modulator of alternative splicing. General coactivator of nuclear receptor-induced gene expression. The polypeptide is Arginine and glutamate-rich protein 1 (arglu1) (Xenopus tropicalis (Western clawed frog)).